We begin with the raw amino-acid sequence, 164 residues long: CGRRRGSLAWPDASSPSANPRPGAGAAESSACTTSGWSRWRTSLLVAGALLGLQWLPQLAGLWVACFGFGTGACIILALMFMGLRTENPRQAAALSGMAQCVGYLLAAFGPPLVGGLRDRSQDWNPALTVCLVLSLTMAAAGMLAGRNRRIRSASTAASTPAAG.

Residues 1-30 form a disordered region; sequence CGRRRGSLAWPDASSPSANPRPGAGAAESS. Helical transmembrane passes span 62 to 82, 97 to 117, and 126 to 146; these read LWVA…LMFM, GMAQ…VGGL, and PALT…MLAG.

Belongs to the major facilitator superfamily. Cyanate porter (TC 2.A.1.17) family.

It localises to the cell membrane. In terms of biological role, may be involved in uptake of anionic 4-hydroxy-benzoate. The chain is Putative anionic 4-hydroxy-benzoate permease from Thauera aromatica.